Here is a 179-residue protein sequence, read N- to C-terminus: Large ribosomal subunit protein uL6 (179 aa).

This sequence belongs to the universal ribosomal protein uL6 family. In terms of assembly, part of the 50S ribosomal subunit.

This protein binds to the 23S rRNA, and is important in its secondary structure. It is located near the subunit interface in the base of the L7/L12 stalk, and near the tRNA binding site of the peptidyltransferase center. The polypeptide is Large ribosomal subunit protein uL6 (Herpetosiphon aurantiacus (strain ATCC 23779 / DSM 785 / 114-95)).